The sequence spans 207 residues: Segregation and condensation protein B (207 aa).

Belongs to the ScpB family. Homodimer. Homodimerization may be required to stabilize the binding of ScpA to the Smc head domains. Component of a cohesin-like complex composed of ScpA, ScpB and the Smc homodimer, in which ScpA and ScpB bind to the head domain of Smc. The presence of the three proteins is required for the association of the complex with DNA.

It localises to the cytoplasm. Functionally, participates in chromosomal partition during cell division. May act via the formation of a condensin-like complex containing Smc and ScpA that pull DNA away from mid-cell into both cell halves. The polypeptide is Segregation and condensation protein B (Mycoplasmopsis pulmonis (strain UAB CTIP) (Mycoplasma pulmonis)).